Consider the following 1017-residue polypeptide: Formin-binding protein 4 (1017 aa).

Disordered regions lie at residues 1 to 141 (MGKK…STDI) and 160 to 202 (PAAP…TSGW). Ser18 is subject to Phosphoserine. A compositionally biased stretch (low complexity) spans 40 to 69 (DSTAAVPSQPAPSAATTTTTAVTAAAASDD). Phosphoserine occurs at positions 116 and 124. Residues 130-141 (SKETNGNQSTDI) are compositionally biased toward polar residues. A Phosphothreonine modification is found at Thr172. The span at 181–200 (AATSTLSSSTSNGTDSTQTS) shows a compositional bias: low complexity. In terms of domain architecture, WW 1 spans 214–248 (GIEMGDWQEVWDENTGCYYYWNTQTNEVTWELPQY). An N6-acetyllysine modification is found at Lys290. Lys301 participates in a covalent cross-link: Glycyl lysine isopeptide (Lys-Gly) (interchain with G-Cter in SUMO1). Lys335 is covalently cross-linked (Glycyl lysine isopeptide (Lys-Gly) (interchain with G-Cter in SUMO2)). Residue Lys348 forms a Glycyl lysine isopeptide (Lys-Gly) (interchain with G-Cter in SUMO1); alternate linkage. Lys348 participates in a covalent cross-link: Glycyl lysine isopeptide (Lys-Gly) (interchain with G-Cter in SUMO2); alternate. Disordered stretches follow at residues 421–519 (LEEG…TTPK), 621–676 (ESQW…CKES), 706–792 (PLPL…IKRK), and 899–994 (TATI…AERN). Ser427, Ser432, Ser435, Ser438, and Ser442 each carry phosphoserine. Residues 428 to 442 (VSGSSPRSDISQPAS) are compositionally biased toward polar residues. Over residues 449-458 (LMSKRGKWKM) the composition is skewed to basic residues. Low complexity predominate over residues 461–474 (RATSPESTSRSSSK). Ser464 carries the post-translational modification Phosphoserine. Residue Thr479 is modified to Phosphothreonine. Residues 491–513 (NSEKIDENSDKEMEVEESPEKIK) are compositionally biased toward basic and acidic residues. 2 positions are modified to phosphoserine: Ser499 and Ser508. Residues Thr516 and Thr517 each carry the phosphothreonine modification. Lys519 is covalently cross-linked (Glycyl lysine isopeptide (Lys-Gly) (interchain with G-Cter in SUMO1); alternate). Lys519 is covalently cross-linked (Glycyl lysine isopeptide (Lys-Gly) (interchain with G-Cter in SUMO2); alternate). Residues 595-629 (NATPKGWSCHWDRDHRRYFYVNEQSGESQWEFPDG) enclose the WW 2 domain. The segment covering 627 to 637 (PDGEEEEEESQ) has biased composition (acidic residues). Residues 640-656 (ENRDETLAKQTLKDKTG) show a composition bias toward basic and acidic residues. Residues 657 to 671 (TDSNSTESSETSTGS) show a composition bias toward low complexity. The segment covering 706–732 (PLPLEMPPPPPPPPESPPPPPPPPPPA) has biased composition (pro residues). Over residues 733–748 (EDGEIQEVEMEDEGSE) the composition is skewed to acidic residues. Low complexity predominate over residues 764 to 786 (SAQTTVVTSQSSVDSTISSSSST). The segment covering 904–925 (EPPPPPPPPPPPPPPAPKMPPP) has biased composition (pro residues). Basic residues predominate over residues 929 to 941 (KKGRKDKAKKSKT). The segment covering 957 to 970 (LDEEDNSSSSEEDR) has biased composition (acidic residues). A phosphoserine mark is found at Ser963, Ser964, and Ser965. The segment covering 971–982 (ESTAQKRIEEWK) has biased composition (basic and acidic residues).

In terms of assembly, binds FMN1. Interacts with the Arg/Gly-rich-flanked Pro-rich of KHDRBS1/SAM68. Arginine methylation in these regions has no effect on this binding. As to expression, highly expressed in the eye.

This chain is Formin-binding protein 4 (FNBP4), found in Homo sapiens (Human).